Here is a 561-residue protein sequence, read N- to C-terminus: Asparagine synthetase [glutamine-hydrolyzing] (561 aa).

The For GATase activity role is filled by Cys2. The Glutamine amidotransferase type-2 domain maps to 2-191 (CGIWALFGSD…PGHYEVLDLK (190 aa)). L-glutamine is bound by residues 49-53 (RLAVV), 75-77 (NGE), and Asp97. The region spanning 213-536 (HAACDTVGNL…PGRSSWLPHY (324 aa)) is the Asparagine synthetase domain. ATP is bound by residues Leu256, Ile288, and 363–364 (SG).

The catalysed reaction is L-aspartate + L-glutamine + ATP + H2O = L-asparagine + L-glutamate + AMP + diphosphate + H(+). Its pathway is amino-acid biosynthesis; L-asparagine biosynthesis; L-asparagine from L-aspartate (L-Gln route): step 1/1. The polypeptide is Asparagine synthetase [glutamine-hydrolyzing] (ASNS) (Gallus gallus (Chicken)).